The following is a 254-amino-acid chain: Ribosomal RNA large subunit methyltransferase E (254 aa).

Residues 1-18 (MTNSGKTGGKSGKGGTGG) are compositionally biased toward gly residues. Positions 1-26 (MTNSGKTGGKSGKGGTGGARALKVRV) are disordered. Positions 89, 91, 119, 135, and 159 each coordinate S-adenosyl-L-methionine. Residue Lys-199 is the Proton acceptor of the active site.

It belongs to the class I-like SAM-binding methyltransferase superfamily. RNA methyltransferase RlmE family.

It is found in the cytoplasm. It carries out the reaction uridine(2552) in 23S rRNA + S-adenosyl-L-methionine = 2'-O-methyluridine(2552) in 23S rRNA + S-adenosyl-L-homocysteine + H(+). Functionally, specifically methylates the uridine in position 2552 of 23S rRNA at the 2'-O position of the ribose in the fully assembled 50S ribosomal subunit. This chain is Ribosomal RNA large subunit methyltransferase E, found in Parvibaculum lavamentivorans (strain DS-1 / DSM 13023 / NCIMB 13966).